The following is a 467-amino-acid chain: Repressible acid phosphatase (467 aa).

Positions 1 to 17 (MFKSVVYSILAASLANA) are cleaved as a signal peptide. H75 acts as the Nucleophile in catalysis. Residues N97, N103, N162, N192, N250, and N315 are each glycosylated (N-linked (GlcNAc...) asparagine). The active-site Proton donor is D338. 6 N-linked (GlcNAc...) asparagine glycosylation sites follow: N356, N390, N439, N445, N456, and N461.

It belongs to the histidine acid phosphatase family. Post-translationally, glycosylated during secretion across the membrane.

It is found in the secreted. It carries out the reaction a phosphate monoester + H2O = an alcohol + phosphate. In terms of biological role, partially mediates extracellular nucleotide derived phosphate hydrolysis along with NPP1 and NPP2. This is Repressible acid phosphatase (PHO5) from Saccharomyces cerevisiae (strain ATCC 204508 / S288c) (Baker's yeast).